The primary structure comprises 661 residues: UvrABC system protein B (661 aa).

The region spanning 25 to 182 (KGLNNKKRSQ…NDLVNLQYER (158 aa)) is the Helicase ATP-binding domain. 38–45 (GITGSGKT) contributes to the ATP binding site. The Beta-hairpin motif lies at 91–114 (YYDYYQPEAYIPKTDVFIEKDSSI). Residues 430–592 (QVEDLVGEIQ…IIPKTINRTI (163 aa)) form the Helicase C-terminal domain. One can recognise a UVR domain in the interval 621–656 (KAHIDKLRKEMLKAASNLEFEQAAKLRDQLKTLEEA).

Belongs to the UvrB family. As to quaternary structure, forms a heterotetramer with UvrA during the search for lesions. Interacts with UvrC in an incision complex.

It is found in the cytoplasm. In terms of biological role, the UvrABC repair system catalyzes the recognition and processing of DNA lesions. A damage recognition complex composed of 2 UvrA and 2 UvrB subunits scans DNA for abnormalities. Upon binding of the UvrA(2)B(2) complex to a putative damaged site, the DNA wraps around one UvrB monomer. DNA wrap is dependent on ATP binding by UvrB and probably causes local melting of the DNA helix, facilitating insertion of UvrB beta-hairpin between the DNA strands. Then UvrB probes one DNA strand for the presence of a lesion. If a lesion is found the UvrA subunits dissociate and the UvrB-DNA preincision complex is formed. This complex is subsequently bound by UvrC and the second UvrB is released. If no lesion is found, the DNA wraps around the other UvrB subunit that will check the other stand for damage. The protein is UvrABC system protein B of Rickettsia bellii (strain OSU 85-389).